The sequence spans 125 residues: uncharacterized protein (125 aa).

This is an uncharacterized protein from Caenorhabditis elegans.